We begin with the raw amino-acid sequence, 286 residues long: ATP synthase gamma chain (286 aa).

It belongs to the ATPase gamma chain family. F-type ATPases have 2 components, CF(1) - the catalytic core - and CF(0) - the membrane proton channel. CF(1) has five subunits: alpha(3), beta(3), gamma(1), delta(1), epsilon(1). CF(0) has three main subunits: a, b and c.

It is found in the cell membrane. Its function is as follows. Produces ATP from ADP in the presence of a proton gradient across the membrane. The gamma chain is believed to be important in regulating ATPase activity and the flow of protons through the CF(0) complex. This is ATP synthase gamma chain from Ureaplasma urealyticum serovar 10 (strain ATCC 33699 / Western).